The primary structure comprises 227 residues: Cytochrome c oxidase subunit 2 (227 aa).

At 1 to 14 (MAYPAQMGFQDATS) the chain is on the mitochondrial intermembrane side. The helical transmembrane segment at 15 to 45 (PIMEELLYFHDHTLMIVFMISSLVLYTISLM) threads the bilayer. Topologically, residues 46 to 59 (LTTSLTHTNTMNAQ) are mitochondrial matrix. A helical membrane pass occupies residues 60–87 (EVETVWTILPAIICILIALPSLRILYMM). Topologically, residues 88-227 (DEINNPSLTI…YFEKWLLTML (140 aa)) are mitochondrial intermembrane. Cu cation-binding residues include H161, C196, E198, C200, H204, and M207. A Mg(2+)-binding site is contributed by E198. The residue at position 218 (Y218) is a Phosphotyrosine.

This sequence belongs to the cytochrome c oxidase subunit 2 family. As to quaternary structure, component of the cytochrome c oxidase (complex IV, CIV), a multisubunit enzyme composed of 14 subunits. The complex is composed of a catalytic core of 3 subunits MT-CO1, MT-CO2 and MT-CO3, encoded in the mitochondrial DNA, and 11 supernumerary subunits COX4I, COX5A, COX5B, COX6A, COX6B, COX6C, COX7A, COX7B, COX7C, COX8 and NDUFA4, which are encoded in the nuclear genome. The complex exists as a monomer or a dimer and forms supercomplexes (SCs) in the inner mitochondrial membrane with NADH-ubiquinone oxidoreductase (complex I, CI) and ubiquinol-cytochrome c oxidoreductase (cytochrome b-c1 complex, complex III, CIII), resulting in different assemblies (supercomplex SCI(1)III(2)IV(1) and megacomplex MCI(2)III(2)IV(2)). Found in a complex with TMEM177, COA6, COX18, COX20, SCO1 and SCO2. Interacts with TMEM177 in a COX20-dependent manner. Interacts with COX20. Interacts with COX16. Requires Cu cation as cofactor.

The protein resides in the mitochondrion inner membrane. It carries out the reaction 4 Fe(II)-[cytochrome c] + O2 + 8 H(+)(in) = 4 Fe(III)-[cytochrome c] + 2 H2O + 4 H(+)(out). Component of the cytochrome c oxidase, the last enzyme in the mitochondrial electron transport chain which drives oxidative phosphorylation. The respiratory chain contains 3 multisubunit complexes succinate dehydrogenase (complex II, CII), ubiquinol-cytochrome c oxidoreductase (cytochrome b-c1 complex, complex III, CIII) and cytochrome c oxidase (complex IV, CIV), that cooperate to transfer electrons derived from NADH and succinate to molecular oxygen, creating an electrochemical gradient over the inner membrane that drives transmembrane transport and the ATP synthase. Cytochrome c oxidase is the component of the respiratory chain that catalyzes the reduction of oxygen to water. Electrons originating from reduced cytochrome c in the intermembrane space (IMS) are transferred via the dinuclear copper A center (CU(A)) of subunit 2 and heme A of subunit 1 to the active site in subunit 1, a binuclear center (BNC) formed by heme A3 and copper B (CU(B)). The BNC reduces molecular oxygen to 2 water molecules using 4 electrons from cytochrome c in the IMS and 4 protons from the mitochondrial matrix. This chain is Cytochrome c oxidase subunit 2 (MT-CO2), found in Daubentonia madagascariensis (Aye-aye).